We begin with the raw amino-acid sequence, 221 residues long: Large ribosomal subunit protein uL3 (221 aa).

A disordered region spans residues 140–160; it reads GGPKTHGSGFHRHAGSIGMRS.

It belongs to the universal ribosomal protein uL3 family. Part of the 50S ribosomal subunit. Forms a cluster with proteins L14 and L19.

One of the primary rRNA binding proteins, it binds directly near the 3'-end of the 23S rRNA, where it nucleates assembly of the 50S subunit. This is Large ribosomal subunit protein uL3 from Chlamydia caviae (strain ATCC VR-813 / DSM 19441 / 03DC25 / GPIC) (Chlamydophila caviae).